The chain runs to 394 residues: Acetate kinase (394 aa).

Position 7 (asparagine 7) interacts with Mg(2+). Lysine 14 provides a ligand contact to ATP. Arginine 90 serves as a coordination point for substrate. Catalysis depends on aspartate 147, which acts as the Proton donor/acceptor. Residues 204-208 (HLGNG), 278-280 (DLR), and 326-330 (GIGEN) contribute to the ATP site. Glutamate 380 provides a ligand contact to Mg(2+).

The protein belongs to the acetokinase family. Homodimer. It depends on Mg(2+) as a cofactor. The cofactor is Mn(2+).

Its subcellular location is the cytoplasm. It carries out the reaction acetate + ATP = acetyl phosphate + ADP. It participates in metabolic intermediate biosynthesis; acetyl-CoA biosynthesis; acetyl-CoA from acetate: step 1/2. Functionally, catalyzes the formation of acetyl phosphate from acetate and ATP. Can also catalyze the reverse reaction. The chain is Acetate kinase from Flavobacterium johnsoniae (strain ATCC 17061 / DSM 2064 / JCM 8514 / BCRC 14874 / CCUG 350202 / NBRC 14942 / NCIMB 11054 / UW101) (Cytophaga johnsonae).